The following is a 344-amino-acid chain: RNA-binding protein squid (344 aa).

The segment at 1-55 is disordered; it reads MAENKQVDTEINGEDFTKDVTADGPGSENGDAGAAGSTNGSSDNQSAASGQRDDD. Polar residues predominate over residues 36 to 49; it reads GSTNGSSDNQSAAS. RRM domains lie at 56-138 and 136-213; these read RKLF…HGKI and GKIF…RATP. Residue S148 is modified to Phosphoserine. 2 disordered regions span residues 214–238 and 301–344; these read KPEN…RGGY and GGGG…HQPY. The interval 215–254 is M9-like motif; it reads PENQMMGGMRGGPRGGMRGGRGGYGGRGGYNNQWDGQGSY. Gly residues-rich tracts occupy residues 222-238 and 301-337; these read GMRG…RGGY and GGGG…GGGR. The M9 motif stretch occupies residues 300–338; the sequence is GGGGGGNMGGGRGGPRGGGGPKGGGGFNGGKQRGGGGRQ.

As to quaternary structure, interacts with bru1/Bruno; the interaction is direct but weak, and may play a role in regulation of grk mRNA localization and translation. Interacts (probably via M9 and M9-like motifs) with Tnpo/Transportin; the interaction is direct and is involved in nuclear localization. Interacts with fs(1)K10 (via N-terminus); may be involved in localization of sqd in the oocyte during oogenesis. In terms of assembly, interacts (via C-terminus) with Hrb27C; the interaction is RNA dependent. Does not interact with Tnpo/Transportin. Interacts with fs(1)K10 (via N-terminus); may be involved in localization of sqd in the oocyte during oogenesis. As to quaternary structure, interacts (probably via M9-like motif) with Tnpo/Transportin; the interaction is direct and is involved in nuclear localization. Interacts with fs(1)K10 (via N-terminus); may be involved in localization of sqd in the oocyte during oogenesis.

The protein localises to the nucleus. Its subcellular location is the cytoplasm. Functionally, component of ribonucleosomes. Could be needed to organize a concentration gradient of a dorsalizing morphogen (Dm) originating in the germinal vesicle. At least one of the isoforms is essential in somatic tissues. Interacts with grk mRNA (via 3' UTR) and involved in its localization to the dorsal anterior region of the oocyte during dorsal-ventral axis determination; may function as a ribonuclear protein complex together with otu and Hrb27C. Required for polytene chromosome dispersal in nurse cells during oogenesis; nuclear isoforms play a greater role in this than cytoplasmic isoforms. Its function is as follows. Required nonredundantly with isoform A/sqdA for dorsoventral pattern determination during oogenesis. May be important in somatic tissues. In terms of biological role, required nonredundantly with isoform B/SqdS for dorsoventral pattern determination during oogenesis. May lack a role in dorsoventral pattern determination during oogenesis. May be important in somatic tissues. The polypeptide is RNA-binding protein squid (Drosophila melanogaster (Fruit fly)).